The following is a 77-amino-acid chain: MKKLVIALCLMMVLAVMVEEAEARWCFRVCYRGICYRKCRGKRNEVRQYRDRGYDVRAIPDETFFTRQDEDEDDDEE.

The N-terminal stretch at 1–23 (MKKLVIALCLMMVLAVMVEEAEA) is a signal peptide. Disulfide bonds link Cys-26-Cys-39 and Cys-30-Cys-35. Arginine amide is present on Arg-40. Residues 41–77 (GKRNEVRQYRDRGYDVRAIPDETFFTRQDEDEDDDEE) constitute a propeptide that is removed on maturation.

The protein belongs to the tachyplesin/polyphemusin family. Hemocytes.

The protein localises to the secreted. Functionally, significantly inhibits the growth of Gram-negative and Gram-positive bacteria. The polypeptide is Tachyplesin-2 (Tachypleus tridentatus (Japanese horseshoe crab)).